Here is a 121-residue protein sequence, read N- to C-terminus: Splicing factor 3B subunit 6 (121 aa).

Residues 12–25 (EVNRLLYVRNLPYK) form an interaction with pre-mRNA branch site region. The 76-residue stretch at 15 to 90 (RLLYVRNLPY…RYLVVLYYQS (76 aa)) folds into the RRM domain.

This sequence belongs to the SF3B6 family. In terms of assembly, component of splicing factor SF3B complex. Component of the U11/U12 snRNPs that are part of the U12-type spliceosome.

The protein resides in the nucleus. In terms of biological role, involved in pre-mRNA splicing as a component of the splicing factor SF3B complex. SF3B complex is required for 'A' complex assembly formed by the stable binding of U2 snRNP to the branchpoint sequence (BPS) in pre-mRNA. Directly contacts the pre-mRNA branch site adenosine for the first catalytic step of splicing. Enters the spliceosome and associates with the pre-mRNA branch site as part of the 17S U2 or, in the case of the minor spliceosome, as part of the 18S U11/U12 snRNP complex, and thus may facilitate the interaction of these snRNP with the branch sites of U2 and U12 respectively. The chain is Splicing factor 3B subunit 6 from Drosophila melanogaster (Fruit fly).